Consider the following 396-residue polypeptide: MTTNTVSRKVAWLRVVTLAVAAFIFNTTEFVPVGLLSDIAQSFHMQTAQVGIMLTIYAWVVALMSLPFMLMTSQVERRKLLICLFVVFIASHVLSFLSWSFTVLVISRIGVAFAHAIFWSITASLAIRMAPAGKRAQALSLIATGTALAMVLGLPLGRIVGQYFGWRMTFFAIGIGAFITLLCLIKLLPLLPSEHSGSLKSLPLLFRRPALMSIYLLTVVVVTAHYTAYSYIEPFVQNIAGFSANFATALLLLLGGAGIIGSVIFGKLGNQYASALVSTAIALLLVCLALLLPAANSEIHLGVLSIFWGIAMMIIGLGMQVKVLALAPDATDVAMALFSGIFNIGIGAGALVGNQVSLHWSMSMIGYVGAVPAFAALIWSIIIFRRWPVTLEEQTQ.

The next 12 helical transmembrane spans lie at 15 to 35 (VVTL…PVGL), 50 to 70 (VGIM…PFML), 81 to 101 (LICL…SWSF), 103 to 123 (VLVI…SITA), 136 to 156 (AQAL…GLPL), 170 to 190 (FFAI…LLPL), 209 to 229 (PALM…YTAY), 246 to 266 (FATA…VIFG), 275 to 295 (ALVS…LPAA), 299 to 319 (IHLG…GLGM), 333 to 353 (VAMA…ALVG), and 364 to 384 (MIGY…IIIF).

The protein belongs to the major facilitator superfamily. SotB (TC 2.A.1.2) family.

Its subcellular location is the cell inner membrane. Involved in the efflux of sugars. The physiological role may be the reduction of the intracellular concentration of toxic sugars or sugar metabolites. The protein is Probable sugar efflux transporter of Escherichia coli O17:K52:H18 (strain UMN026 / ExPEC).